The chain runs to 213 residues: MSRNSYIQQSSDIQAAGGLVPMVIEQSARGERAYDIYSRLLKERVIFLVGPVEDYMANLVVAQLLFLEAENPDKDIHLYINSPGGSVTAGMSIYDTMQFIKPDVSTICIGQACSMGAFLLAAGAKGKRHCLPNSRVMIHQPLGGFQGQATDIEIHAQEILNIKARLNELLAYHTGQDLETIKRDTERDNFMSASRAAEYGLIDSVYDKRQLAS.

The Nucleophile role is filled by Ser114. The active site involves His139.

The protein belongs to the peptidase S14 family. As to quaternary structure, fourteen ClpP subunits assemble into 2 heptameric rings which stack back to back to give a disk-like structure with a central cavity, resembling the structure of eukaryotic proteasomes.

Its subcellular location is the cytoplasm. The catalysed reaction is Hydrolysis of proteins to small peptides in the presence of ATP and magnesium. alpha-casein is the usual test substrate. In the absence of ATP, only oligopeptides shorter than five residues are hydrolyzed (such as succinyl-Leu-Tyr-|-NHMec, and Leu-Tyr-Leu-|-Tyr-Trp, in which cleavage of the -Tyr-|-Leu- and -Tyr-|-Trp bonds also occurs).. Cleaves peptides in various proteins in a process that requires ATP hydrolysis. Has a chymotrypsin-like activity. Plays a major role in the degradation of misfolded proteins. The protein is ATP-dependent Clp protease proteolytic subunit of Pseudomonas putida (strain ATCC 47054 / DSM 6125 / CFBP 8728 / NCIMB 11950 / KT2440).